Consider the following 408-residue polypeptide: Phosphoglycerate kinase (408 aa).

Substrate-binding positions include 24 to 26 (DLN), R39, 62 to 65 (HLGR), R121, and R161. ATP is bound by residues K211, G307, E338, and 364 to 367 (GGDS).

It belongs to the phosphoglycerate kinase family. In terms of assembly, monomer.

It is found in the cytoplasm. It catalyses the reaction (2R)-3-phosphoglycerate + ATP = (2R)-3-phospho-glyceroyl phosphate + ADP. It functions in the pathway carbohydrate degradation; glycolysis; pyruvate from D-glyceraldehyde 3-phosphate: step 2/5. The chain is Phosphoglycerate kinase from Paenarthrobacter aurescens (strain TC1).